The following is a 175-amino-acid chain: UPF0398 protein SPH_0478 (175 aa).

The protein belongs to the UPF0398 family.

This Streptococcus pneumoniae (strain Hungary19A-6) protein is UPF0398 protein SPH_0478.